The primary structure comprises 330 residues: Pyridoxal 5'-phosphate synthase subunit PdxS (330 aa).

Residue Asp-23 participates in D-ribose 5-phosphate binding. Lys-80 functions as the Schiff-base intermediate with D-ribose 5-phosphate in the catalytic mechanism. Gly-152 contributes to the D-ribose 5-phosphate binding site. Arg-164 is a binding site for D-glyceraldehyde 3-phosphate. Residues Gly-250 and 271-272 contribute to the D-ribose 5-phosphate site; that span reads GS.

Belongs to the PdxS/SNZ family. As to quaternary structure, in the presence of PdxT, forms a dodecamer of heterodimers.

The catalysed reaction is aldehydo-D-ribose 5-phosphate + D-glyceraldehyde 3-phosphate + L-glutamine = pyridoxal 5'-phosphate + L-glutamate + phosphate + 3 H2O + H(+). Its pathway is cofactor biosynthesis; pyridoxal 5'-phosphate biosynthesis. Functionally, catalyzes the formation of pyridoxal 5'-phosphate from ribose 5-phosphate (RBP), glyceraldehyde 3-phosphate (G3P) and ammonia. The ammonia is provided by the PdxT subunit. Can also use ribulose 5-phosphate and dihydroxyacetone phosphate as substrates, resulting from enzyme-catalyzed isomerization of RBP and G3P, respectively. The protein is Pyridoxal 5'-phosphate synthase subunit PdxS of Methanocaldococcus jannaschii (strain ATCC 43067 / DSM 2661 / JAL-1 / JCM 10045 / NBRC 100440) (Methanococcus jannaschii).